The sequence spans 239 residues: Phosphothreonine lyase OspF (239 aa).

The active-site Proton donor is His104. The active-site Proton acceptor is the Lys134.

Belongs to the phosphothreonine lyase family.

It localises to the secreted. With respect to regulation, inhibited by the tyrosine phosphatase inhibitor vanadate. Catalyzes the removal of the phosphate group from the phosphothreonine in the mitogen-activated protein kinases such as MAPK2/ERK2, MAPK3/ERK1, MAPK8 and MAPK14 in an irreversible reaction, thus preventing the downstream phosphorylation of histone H3. This epigenetic modification results in inhibition of the transcription of a specific subset of pro-inflammatory genes, and ultimately to a reduced immune response against the invading pathogen. The diminished immune response enhances the bacterium's ability to disseminate and multiply within the host. In Shigella flexneri, this protein is Phosphothreonine lyase OspF (ospF).